The chain runs to 206 residues: Glutathione S-transferase class-mu 28 kDa isozyme (206 aa).

The GST N-terminal domain occupies 1-81 (VKLIYFNGRG…FIARKHNMMG (81 aa)). Glutathione is bound by residues Tyr5, 5–6 (YF), Arg11, 36–40 (WPKIK), Leu48, 50–51 (IV), and 65–66 (ES). The region spanning 83–206 (TDDEYYIIEK…YLSERHATAF (124 aa)) is the GST C-terminal domain.

It belongs to the GST superfamily. Mu family. Homodimer.

It carries out the reaction RX + glutathione = an S-substituted glutathione + a halide anion + H(+). Its function is as follows. Conjugation of reduced glutathione to a wide number of exogenous and endogenous hydrophobic electrophiles. GST isoenzymes appear to play a central role in the parasite detoxification system. Other functions are also suspected including a role in increasing the solubility of haematin in the parasite gut. This is Glutathione S-transferase class-mu 28 kDa isozyme from Schistosoma japonicum (Blood fluke).